The sequence spans 322 residues: Phosphatidylserine decarboxylase proenzyme (322 aa).

Active-site charge relay system; for autoendoproteolytic cleavage activity residues include aspartate 90, histidine 147, and serine 254. Serine 254 acts as the Schiff-base intermediate with substrate; via pyruvic acid; for decarboxylase activity in catalysis. Pyruvic acid (Ser); by autocatalysis is present on serine 254. The interval threonine 292–valine 322 is disordered. A compositionally biased stretch (basic and acidic residues) spans glutamate 308–valine 322.

The protein belongs to the phosphatidylserine decarboxylase family. PSD-B subfamily. Prokaryotic type I sub-subfamily. Heterodimer of a large membrane-associated beta subunit and a small pyruvoyl-containing alpha subunit. The cofactor is pyruvate. In terms of processing, is synthesized initially as an inactive proenzyme. Formation of the active enzyme involves a self-maturation process in which the active site pyruvoyl group is generated from an internal serine residue via an autocatalytic post-translational modification. Two non-identical subunits are generated from the proenzyme in this reaction, and the pyruvate is formed at the N-terminus of the alpha chain, which is derived from the carboxyl end of the proenzyme. The autoendoproteolytic cleavage occurs by a canonical serine protease mechanism, in which the side chain hydroxyl group of the serine supplies its oxygen atom to form the C-terminus of the beta chain, while the remainder of the serine residue undergoes an oxidative deamination to produce ammonia and the pyruvoyl prosthetic group on the alpha chain. During this reaction, the Ser that is part of the protease active site of the proenzyme becomes the pyruvoyl prosthetic group, which constitutes an essential element of the active site of the mature decarboxylase.

Its subcellular location is the cell membrane. The enzyme catalyses a 1,2-diacyl-sn-glycero-3-phospho-L-serine + H(+) = a 1,2-diacyl-sn-glycero-3-phosphoethanolamine + CO2. It participates in phospholipid metabolism; phosphatidylethanolamine biosynthesis; phosphatidylethanolamine from CDP-diacylglycerol: step 2/2. In terms of biological role, catalyzes the formation of phosphatidylethanolamine (PtdEtn) from phosphatidylserine (PtdSer). The chain is Phosphatidylserine decarboxylase proenzyme from Escherichia coli O7:K1 (strain IAI39 / ExPEC).